Reading from the N-terminus, the 542-residue chain is Adenine deaminase (542 aa).

Belongs to the metallo-dependent hydrolases superfamily. Adenine deaminase family. Mn(2+) serves as cofactor.

It carries out the reaction adenine + H2O + H(+) = hypoxanthine + NH4(+). In Methanosphaera stadtmanae (strain ATCC 43021 / DSM 3091 / JCM 11832 / MCB-3), this protein is Adenine deaminase.